The following is a 1469-amino-acid chain: Histone-lysine N-methyltransferase, H3 lysine-4 specific (1469 aa).

Disordered regions lie at residues 1–478 (MAPH…SETV), 676–699 (AVKEEMERRYPPKKPSALPSDMKV), 805–839 (FTSAPFVRHPRERREDSWTNERGRRLKGESSTRHW), 858–891 (YSEESEEERPRHPTKVPYPQRKRLATGPSKEDEY), 963–984 (TSSGPRAQTDASEPVTGGVGES), and 999–1068 (RPMP…REER). 5 stretches are compositionally biased toward basic and acidic residues: residues 64 to 74 (KGKESLDRNGE), 100 to 117 (SLERGNGKGGWDNRDERT), 127 to 138 (INKEKIRPRSDF), 148 to 165 (EDDRNRDRGRYHERDRSR), and 172 to 222 (GGGE…EYKH). A compositionally biased stretch (low complexity) spans 250 to 262 (PVSVSSSSSSSAR). Positions 291–300 (LLENSISRSG) are enriched in polar residues. 2 stretches are compositionally biased toward pro residues: residues 332–344 (PSPPTGKYPPSPP) and 361–370 (DQRPPTPPLP). 2 stretches are compositionally biased toward low complexity: residues 371–382 (ENSSPTSPSLES) and 411–427 (SSSSLSRLSSLSAALSR). Polar residues predominate over residues 455–464 (SPPNNAENQL). Basic and acidic residues-rich tracts occupy residues 676–685 (AVKEEMERRY) and 816–836 (ERREDSWTNERGRRLKGESST). Residues 963-973 (TSSGPRAQTDA) show a composition bias toward polar residues. Over residues 1006–1017 (KSGKSATIRRKV) the composition is skewed to basic residues. Positions 1054-1068 (EDDRPFARSVQREER) are enriched in basic and acidic residues. Residues 1327–1444 (KQLRFARSAI…PGEEILYDYK (118 aa)) form the SET domain. Residue Y1443 participates in S-adenosyl-L-methionine binding. The 17-residue stretch at 1453 to 1469 (LRVPCLCGAATCRGWLN) folds into the Post-SET domain.

It belongs to the class V-like SAM-binding methyltransferase superfamily. As to quaternary structure, component of the Set1C/COMPASS complex.

Its subcellular location is the nucleus. The protein resides in the chromosome. It carries out the reaction L-lysyl(4)-[histone H3] + 3 S-adenosyl-L-methionine = N(6),N(6),N(6)-trimethyl-L-lysyl(4)-[histone H3] + 3 S-adenosyl-L-homocysteine + 3 H(+). The enzyme catalyses N(6)-methyl-L-lysyl(4)-[histone H3] + S-adenosyl-L-methionine = N(6),N(6)-dimethyl-L-lysyl(4)-[histone H3] + S-adenosyl-L-homocysteine + H(+). It catalyses the reaction N(6),N(6)-dimethyl-L-lysyl(4)-[histone H3] + S-adenosyl-L-methionine = N(6),N(6),N(6)-trimethyl-L-lysyl(4)-[histone H3] + S-adenosyl-L-homocysteine + H(+). Functionally, catalytic component of the COMPASS (Set1C) complex that specifically mono-, di- and trimethylates histone H3 to form H3K4me1/2/3. Binds RNAs which might negatively affect its histone methyltransferase activity. COMPASS recognizes ubiquitinated H2B on one face of the nucleosome which stimulates the methylation of H3 on the opposing face. The chain is Histone-lysine N-methyltransferase, H3 lysine-4 specific (SET1) from Cryptococcus neoformans var. neoformans serotype D (strain B-3501A) (Filobasidiella neoformans).